The chain runs to 381 residues: Cytochrome b (381 aa).

4 consecutive transmembrane segments (helical) span residues 31-51 (FGFL…FLAM), 75-97 (WLLR…IHIF), 112-132 (VWVI…IGYV), and 178-198 (FFSL…VHLA). Heme b-binding residues include H81 and H95. Heme b is bound by residues H182 and H196. H201 contacts a ubiquinone. Transmembrane regions (helical) follow at residues 224–244 (FIVK…IFVY), 288–308 (LGGV…PWIH), 320–340 (LYRL…WIGG), and 347–367 (YVII…ILLP).

The protein belongs to the cytochrome b family. The main subunits of complex b-c1 are: cytochrome b, cytochrome c1 and the Rieske protein. Requires heme b as cofactor.

It is found in the mitochondrion inner membrane. Functionally, component of the ubiquinol-cytochrome c reductase complex (complex III or cytochrome b-c1 complex) that is part of the mitochondrial respiratory chain. The b-c1 complex mediates electron transfer from ubiquinol to cytochrome c. Contributes to the generation of a proton gradient across the mitochondrial membrane that is then used for ATP synthesis. The sequence is that of Cytochrome b (MT-CYB) from Chondrus crispus (Carrageen Irish moss).